The chain runs to 916 residues: Extracellular signal-regulated kinase 7 (916 aa).

A Protein kinase domain is found at 25–319 (FDVRKRMGKG…AKEAIRHPYV (295 aa)). ATP-binding positions include 31 to 39 (MGKGAYGIV) and Lys-54. The active-site Proton acceptor is Asp-149. Polar residues-rich tracts occupy residues 364-376 (CSNR…TPSS) and 390-403 (QART…TTSP). Disordered stretches follow at residues 364 to 419 (CSNR…TQSR), 452 to 477 (PPAA…KSVP), 588 to 608 (PSET…QMKR), 711 to 742 (KKLQ…SQNY), 792 to 813 (ELNP…PGRD), and 883 to 916 (CRHR…PESN). 3 stretches are compositionally biased toward basic and acidic residues: residues 590–608 (ETEH…QMKR), 715–730 (RSKE…RRAL), and 800–811 (GGRDSGSEHSPG). Residues 883–892 (CRHRHHKPNH) show a composition bias toward basic residues. Over residues 894-903 (APYDHMRPTE) the composition is skewed to basic and acidic residues.

Belongs to the protein kinase superfamily. Ser/Thr protein kinase family.

The catalysed reaction is L-seryl-[protein] + ATP = O-phospho-L-seryl-[protein] + ADP + H(+). The enzyme catalyses L-threonyl-[protein] + ATP = O-phospho-L-threonyl-[protein] + ADP + H(+). Functionally, atypical MAPK protein that regulates protein secretion in a kinase activity-dependent manner. In response to starvation regulates protein secretion by mediating transitional endoplasmic reticulum site disassembly. Mediates inhibition of insulin-like peptide secretion upon disturbed ribosome biogenesis and acts as a downstream effector of TP53. In Drosophila melanogaster (Fruit fly), this protein is Extracellular signal-regulated kinase 7.